A 517-amino-acid chain; its full sequence is Nicotine N-demethylase CYP82E4 (517 aa).

The helical transmembrane segment at 2–22 (LSPIEAIVGLVTFTFLFYFLW) threads the bilayer. Lys-254 is covalently cross-linked (Glycyl lysine isopeptide (Lys-Gly) (interchain with G-Cter in ubiquitin)). A heme-binding site is contributed by Cys-457.

This sequence belongs to the cytochrome P450 family. CYP82E2 subfamily. It depends on heme as a cofactor. In terms of tissue distribution, expressed in leaves.

The protein localises to the membrane. It catalyses the reaction (S)-nicotine + reduced [NADPH--hemoprotein reductase] + O2 = (S)-nornicotine + formaldehyde + oxidized [NADPH--hemoprotein reductase] + H2O + H(+). It functions in the pathway alkaloid biosynthesis; nicotine biosynthesis. Its function is as follows. Involved in the biosynthesis of pyridine alkaloid natural products, leading mainly to the production of anabasine, anatabine, nicotine and nornicotine, effective deterrents against herbivores with antiparasitic and pesticide properties (neurotoxins); nornicotine serves as the precursor in the synthesis of the carcinogen compound N'-nitrosonornicotine (NNN). Catalyzes the demethylation of nicotine to form nornicotine. In Nicotiana tomentosiformis (Tobacco), this protein is Nicotine N-demethylase CYP82E4.